A 510-amino-acid polypeptide reads, in one-letter code: Bone morphogenetic protein 6 (510 aa).

Residues 1 to 20 form the signal peptide; sequence MPGLGRRAQWLCWWWGLLCS. A propeptide spanning residues 21-371 is cleaved from the precursor; that stretch reads CGPPPLRPPL…VSEVHVRTTR (351 aa). Disordered regions lie at residues 87–129 and 143–199; these read PHRP…RLKS and NDDE…PLTS. Positions 106-116 are enriched in low complexity; that stretch reads PQQQQQQQQQQ. Residues asparagine 238, asparagine 266, asparagine 383, asparagine 401, and asparagine 451 are each glycosylated (N-linked (GlcNAc...) asparagine). The segment at 370 to 402 is disordered; sequence TRSASSRRRQQSRNRSTQSQDVSRGSGSSDYNG. Over residues 390–401 the composition is skewed to polar residues; sequence DVSRGSGSSDYN. 3 disulfides stabilise this stretch: cysteine 409/cysteine 475, cysteine 438/cysteine 507, and cysteine 442/cysteine 509.

Belongs to the TGF-beta family. In terms of assembly, interacts with SOSTDC1. Interacts (when glycosylated) with type I receptor ACVR1; the interaction may induce HAMP expression. Interacts with type II receptor ACVR2B. Interacts with Hemojuvelin/HJV. Interacts with ERFE; the interaction inhibits BMP-induced transcription of HAMP. Interacts with BMPR1A/ALK3. Forms heterodimers with BMP2 in vitro; the heterodimer then binds to its receptor BMPR1A /ALK3 and may induce HAMP expression. In terms of tissue distribution, expressed in the lung. Low levels seen in the kidney.

The protein localises to the secreted. Its function is as follows. Growth factor of the TGF-beta superfamily that plays essential roles in many developmental processes including cartilage and bone formation. Also plays an important role in the regulation of HAMP/hepcidin expression and iron metabolism by acting as a ligand for hemojuvelin/HJV. Also acts to promote expression of HAMP, potentially via the interaction with its receptor BMPR1A/ALK3. Initiates the canonical BMP signaling cascade by associating with type I receptor ACVR1 and type II receptor ACVR2B. In turn, ACVR1 propagates signal by phosphorylating SMAD1/5/8 that travel to the nucleus and act as activators and repressors of transcription of target. Can also signal through non-canonical pathway such as TAZ-Hippo signaling cascade to modulate VEGF signaling by regulating VEGFR2 expression. This Mus musculus (Mouse) protein is Bone morphogenetic protein 6 (Bmp6).